The primary structure comprises 876 residues: Leucine--tRNA ligase (876 aa).

The 'HIGH' region motif lies at 42 to 52 (PYPSGKLHMGH). The short motif at 634 to 638 (KMGKS) is the 'KMSKS' region element. Lys-637 contributes to the ATP binding site.

This sequence belongs to the class-I aminoacyl-tRNA synthetase family.

Its subcellular location is the cytoplasm. The catalysed reaction is tRNA(Leu) + L-leucine + ATP = L-leucyl-tRNA(Leu) + AMP + diphosphate. In Variovorax paradoxus (strain S110), this protein is Leucine--tRNA ligase.